A 1306-amino-acid chain; its full sequence is Activating transcription factor 7-interacting protein 1 (1306 aa).

Position 1 is an N-acetylmethionine (Met1). The tract at residues 1–23 is disordered; sequence MDSVEEPQKKVFKARKTMRASDR. Residue Lys33 forms a Glycyl lysine isopeptide (Lys-Gly) (interchain with G-Cter in SUMO2) linkage. Phosphoserine is present on residues Ser57 and Ser112. Disordered regions lie at residues 104-470, 496-604, 689-722, 765-785, 871-895, 920-1060, and 1152-1196; these read EDLN…SMET, LPVE…SKRR, AAKD…NNMT, VVSS…PAAP, PLPN…NSST, RTSL…GPSQ, and AGPQ…STSL. Composition is skewed to polar residues over residues 109 to 134 and 143 to 162; these read EALS…SPAS and VSDN…SDNP. At Thr124 the chain carries Phosphothreonine. Composition is skewed to low complexity over residues 185–212, 246–261, and 284–303; these read EEPP…CSEP, EAAS…ASDE, and PSGD…LPRS. Residues 432–441 are compositionally biased toward basic and acidic residues; sequence QSEKDEHKSP. Phosphoserine is present on residues Ser511, Ser514, Ser516, and Ser533. Residues 513-523 show a composition bias toward polar residues; it reads GSPSKQESSEN. 3 stretches are compositionally biased toward basic and acidic residues: residues 557 to 566, 592 to 601, and 689 to 699; these read EGEKSEKDGK, KSEDMDSVES, and AAKDDLKKRQE. Residues 587–605 carry the Nuclear localization signal motif; the sequence is RRKRSKSEDMDSVESKRRR. A Glycyl lysine isopeptide (Lys-Gly) (interchain with G-Cter in SUMO2) cross-link involves residue Lys592. Position 593 is a phosphoserine (Ser593). Residues 596–851 are interaction with SETDB1; the sequence is MDSVESKRRR…NQPSGNVEFI (256 aa). Positions 666–696 form a coiled coil; sequence NKRHKAVLTELQAKIARLTKRFGAAKDDLKK. Phosphoserine occurs at positions 700 and 707. Positions 713-722 are enriched in polar residues; the sequence is NDTNSNNNMT. Positions 871–884 are enriched in pro residues; it reads PLPNPTKPNIPSVP. Ser933 is modified (phosphoserine). Glycyl lysine isopeptide (Lys-Gly) (interchain with G-Cter in SUMO2) cross-links involve residues Lys944 and Lys974. Positions 948–981 are enriched in polar residues; the sequence is STFSPPSSAEQNSSATPRIVTENQTNKTVDSSIN. A compositionally biased stretch (low complexity) spans 987 to 1000; it reads STSQSGKASSSDSS. The tract at residues 1001–1011 is interaction with SUMO; it reads GVIDLTMDDEE. Residues 1022-1040 are compositionally biased toward low complexity; it reads SPPSSSTVSTSQPMSRPLQ. Positions 1054–1143 constitute a Fibronectin type-III 1 domain; sequence PTSGPSQATI…RVPQTTTYVV (90 aa). Residues 1170–1187 show a composition bias toward pro residues; the sequence is PRPLHPAPLPEAPQPQRL. The interval 1190–1306 is interaction with MBD1; sequence EAASTSLPQK…TDVISSSQNS (117 aa). The Fibronectin type-III 2 domain maps to 1196–1302; it reads LPQKPHLKLA…DPQSTDVISS (107 aa).

The protein belongs to the MCAF family. Interacts with MBD1; the interaction is enhanced when MBD1 is sumoylated. Interacts with SETDB1; the interaction protects SETDB1 from proteasomal degradation and is required to stimulate histone methyltransferase activity and facilitate the conversion of dimethylated to trimethylated H3 'Lys-9'. Interacts with SUMO ubiquitin-like proteins (SUMO1, SUNO2 and SUMO3), with a preference for SUMO2 and SUMO3. Interacts with SP1, ATF7 and ZHX1. Interacts with the general transcription machinery, including ERCC2, ERCC3, GTF2E1, GTF2E2 and POLR2A. As to expression, ubiquitously expressed at all stages studied.

The protein resides in the nucleus. In terms of biological role, recruiter that couples transcriptional factors to general transcription apparatus and thereby modulates transcription regulation and chromatin formation. Can both act as an activator or a repressor depending on the context. Required for HUSH-mediated heterochromatin formation and gene silencing. Mediates MBD1-dependent transcriptional repression, probably by recruiting complexes containing SETDB1. Stabilizes SETDB1, is required to stimulate histone methyltransferase activity of SETDB1 and facilitates the conversion of dimethylated to trimethylated H3 'Lys-9' (H3K9me3). The complex formed with MBD1 and SETDB1 represses transcription and couples DNA methylation and histone H3 'Lys-9' trimethylation (H3K9me3). Facilitates telomerase TERT and TERC gene expression by SP1 in cancer cells. In Mus musculus (Mouse), this protein is Activating transcription factor 7-interacting protein 1 (Atf7ip).